A 672-amino-acid polypeptide reads, in one-letter code: Flap endonuclease 1 (672 aa).

The N-domain stretch occupies residues 1–106 (MGIKGLIGFL…QTLAKRKLLR (106 aa)). Asp-34 contributes to the Mg(2+) binding site. DNA contacts are provided by Arg-47 and Arg-72. Mg(2+) is bound by residues Asp-88, Glu-160, Glu-162, Asp-181, and Asp-183. An I-domain region spans residues 124-252 (AIRKYVGRTV…KTAYNLIKKH (129 aa)). Position 160 (Glu-160) interacts with DNA. 2 residues coordinate DNA: Gly-230 and Asp-232. Asp-232 contributes to the Mg(2+) binding site. The interaction with PCNA stretch occupies residues 327–335 (TQLSLKSFF). The segment at 361–436 (VESAVDSTSD…DAKKRNKRVP (76 aa)) is disordered. A compositionally biased stretch (basic and acidic residues) spans 370–382 (DDGKDEVPSDDKV).

Belongs to the XPG/RAD2 endonuclease family. FEN1 subfamily. As to quaternary structure, interacts with PCNA. Three molecules of FEN1 bind to one PCNA trimer with each molecule binding to one PCNA monomer. PCNA stimulates the nuclease activity without altering cleavage specificity. Requires Mg(2+) as cofactor. Post-translationally, phosphorylated. Phosphorylation upon DNA damage induces relocalization to the nuclear plasma.

The protein resides in the nucleus. Its subcellular location is the nucleolus. The protein localises to the nucleoplasm. It localises to the mitochondrion. Structure-specific nuclease with 5'-flap endonuclease and 5'-3' exonuclease activities involved in DNA replication and repair. During DNA replication, cleaves the 5'-overhanging flap structure that is generated by displacement synthesis when DNA polymerase encounters the 5'-end of a downstream Okazaki fragment. It enters the flap from the 5'-end and then tracks to cleave the flap base, leaving a nick for ligation. Also involved in the long patch base excision repair (LP-BER) pathway, by cleaving within the apurinic/apyrimidinic (AP) site-terminated flap. Acts as a genome stabilization factor that prevents flaps from equilibrating into structures that lead to duplications and deletions. Also possesses 5'-3' exonuclease activity on nicked or gapped double-stranded DNA, and exhibits RNase H activity. Also involved in replication and repair of rDNA and in repairing mitochondrial DNA. In Babesia bovis, this protein is Flap endonuclease 1.